We begin with the raw amino-acid sequence, 370 residues long: Dihydroorotate dehydrogenase (quinone) (370 aa).

Residues 67-71 (AGFDK) and Thr91 each bind FMN. Lys71 contributes to the substrate binding site. 116–120 (NRMGF) lines the substrate pocket. 2 residues coordinate FMN: Asn146 and Asn179. Substrate is bound at residue Asn179. The Nucleophile role is filled by Ser182. Position 184 (Asn184) interacts with substrate. Lys222 and Thr250 together coordinate FMN. 251-252 (NT) is a substrate binding site. FMN contacts are provided by residues Gly276, Gly305, and 326-327 (YS).

Belongs to the dihydroorotate dehydrogenase family. Type 2 subfamily. In terms of assembly, monomer. The cofactor is FMN.

It localises to the cell membrane. It carries out the reaction (S)-dihydroorotate + a quinone = orotate + a quinol. It participates in pyrimidine metabolism; UMP biosynthesis via de novo pathway; orotate from (S)-dihydroorotate (quinone route): step 1/1. Functionally, catalyzes the conversion of dihydroorotate to orotate with quinone as electron acceptor. In Streptomyces griseus subsp. griseus (strain JCM 4626 / CBS 651.72 / NBRC 13350 / KCC S-0626 / ISP 5235), this protein is Dihydroorotate dehydrogenase (quinone).